The sequence spans 246 residues: Complement C1q subcomponent subunit C (246 aa).

A signal peptide spans 1–29 (MVVGPSCQPPCGLCLLLLFLLALPLRSQA). Residues 32-113 (GCYGIPGMPG…GPPGEPGVEG (82 aa)) form the Collagen-like domain. Pro37, Pro40, Pro43, Pro46, and Pro64 each carry 4-hydroxyproline. The segment at 44-116 (GAPGKDGHDG…GEPGVEGRYK (73 aa)) is disordered. 5-hydroxylysine is present on Lys76. O-linked (Gal...) hydroxylysine glycosylation is present at Lys76. 4-hydroxyproline is present on residues Pro82, Pro97, Pro100, and Pro106. The span at 99–108 (DPGPRGPPGE) shows a compositional bias: pro residues. Residues 116-246 (KQKHQSVFTV…VFSGFLLFPD (131 aa)) enclose the C1q domain. A disulfide bridge links Cys180 with Cys194.

As to quaternary structure, core component of the complement C1 complex, a calcium-dependent complex composed of 1 molecule of the C1Q subcomplex, 2 molecules of C1R and 2 molecules of C1S. The C1Q subcomplex is composed 18 subunits: 3 chains of C1QA, C1QB, and C1QC trimerize to form 6 collagen-like triple helices connected to six globular ligand-recognition modules (C1q domain). O-linked glycans consist of Glc-Gal disaccharides bound to the oxygen atom of post-translationally added hydroxyl groups.

The protein resides in the secreted. It is found in the cell surface. With respect to regulation, the C1Q subcomplex is inhibited by sulfated molecules, such as triterpenoid sulfates, heparan sulfate, or chondroitin sulfates. Functionally, core component of the complement C1 complex, a multiprotein complex that initiates the classical pathway of the complement system, a cascade of proteins that leads to phagocytosis and breakdown of pathogens and signaling that strengthens the adaptive immune system. The classical complement pathway is initiated by the C1Q subcomplex of the C1 complex, which specifically binds IgG or IgM immunoglobulins complexed with antigens, forming antigen-antibody complexes on the surface of pathogens: C1QA, together with C1QB and C1QC, specifically recognizes and binds the Fc regions of IgG or IgM via its C1q domain. Immunoglobulin-binding activates the proenzyme C1R, which cleaves C1S, initiating the proteolytic cascade of the complement system. The C1Q subcomplex is activated by a hexamer of IgG complexed with antigens, while it is activated by a pentameric IgM. The C1Q subcomplex also recognizes and binds phosphatidylserine exposed on the surface of cells undergoing programmed cell death, possibly promoting activation of the complement system. The protein is Complement C1q subcomponent subunit C of Mus musculus (Mouse).